Consider the following 588-residue polypeptide: Probable basic-leucine zipper transcription factor M (588 aa).

The stretch at 127–157 (QVEQQQEQEQEQEQQQKQQQQQYIEKQIQEI) forms a coiled coil. The span at 221 to 240 (QQNHIDNQSLNNSNTKTSKN) shows a compositional bias: low complexity. Residues 221-250 (QQNHIDNQSLNNSNTKTSKNQQKDNNLPKK) form a disordered region. Positions 263–326 (NNNNIEKKRD…GSNLMRPEPE (64 aa)) constitute a bZIP domain. A basic motif region spans residues 269 to 289 (KKRDQTESSKNFREKKKEYVK). Residues 291–312 (IESKILALTLENDKLKKENDSL) form a leucine-zipper region.

It belongs to the bZIP family.

The protein localises to the nucleus. Functionally, probable transcriptional regulator. The protein is Probable basic-leucine zipper transcription factor M (bzpM) of Dictyostelium discoideum (Social amoeba).